The following is a 1025-amino-acid chain: Probable outer membrane protein PmpF (1025 aa).

A signal peptide spans 1–20 (MTRRILPLSLVFIPLSCISA). Positions 654–681 (NSTETQTANNSIQEQKNTSETFDSNSTT) are disordered. Residues 659–681 (QTANNSIQEQKNTSETFDSNSTT) are compositionally biased toward polar residues. An Autotransporter domain is found at 748-1025 (LLPDDSWFAL…YMNAGGALVF (278 aa)).

This sequence belongs to the PMP outer membrane protein family.

The protein resides in the secreted. It localises to the cell wall. Its subcellular location is the cell outer membrane. The sequence is that of Probable outer membrane protein PmpF (pmpF) from Chlamydia muridarum (strain MoPn / Nigg).